Here is a 152-residue protein sequence, read N- to C-terminus: D-aminoacyl-tRNA deacylase (152 aa).

Positions 142 to 143 match the Gly-cisPro motif, important for rejection of L-amino acids motif; the sequence is GP.

Belongs to the DTD family. In terms of assembly, homodimer.

The protein resides in the cytoplasm. It carries out the reaction glycyl-tRNA(Ala) + H2O = tRNA(Ala) + glycine + H(+). The enzyme catalyses a D-aminoacyl-tRNA + H2O = a tRNA + a D-alpha-amino acid + H(+). In terms of biological role, an aminoacyl-tRNA editing enzyme that deacylates mischarged D-aminoacyl-tRNAs. Also deacylates mischarged glycyl-tRNA(Ala), protecting cells against glycine mischarging by AlaRS. Acts via tRNA-based rather than protein-based catalysis; rejects L-amino acids rather than detecting D-amino acids in the active site. By recycling D-aminoacyl-tRNA to D-amino acids and free tRNA molecules, this enzyme counteracts the toxicity associated with the formation of D-aminoacyl-tRNA entities in vivo and helps enforce protein L-homochirality. This is D-aminoacyl-tRNA deacylase from Burkholderia lata (strain ATCC 17760 / DSM 23089 / LMG 22485 / NCIMB 9086 / R18194 / 383).